Consider the following 101-residue polypeptide: MAAPLSVEVEFGGGAELLFDGIKKHRVTLPGQEEPWDIRNLLIWIKKNLLKERPELFIQGDSVRPGILVLINDADWELLGELDYQLQDQDSVLFISTLHGG.

At Gly101 the chain carries 1-thioglycine. Gly101 participates in a covalent cross-link: Glycyl lysine isopeptide (Gly-Lys) (interchain with K-? in acceptor proteins).

The protein belongs to the URM1 family. In terms of assembly, component of a complex at least composed of URM1, CTU2/NCS2 and CTU1/ATPBD3. In terms of processing, C-terminal thiocarboxylation occurs in 2 steps, it is first acyl-adenylated (-COAMP) via the hesA/moeB/thiF part of MOCS3, then thiocarboxylated (-COSH) via the rhodanese domain of MOCS3.

It localises to the cytoplasm. The protein operates within tRNA modification; 5-methoxycarbonylmethyl-2-thiouridine-tRNA biosynthesis. In terms of biological role, acts as a sulfur carrier required for 2-thiolation of mcm(5)S(2)U at tRNA wobble positions of cytosolic tRNA(Lys), tRNA(Glu) and tRNA(Gln). Serves as sulfur donor in tRNA 2-thiolation reaction by being thiocarboxylated (-COSH) at its C-terminus by MOCS3. The sulfur is then transferred to tRNA to form 2-thiolation of mcm(5)S(2)U. Also acts as a ubiquitin-like protein (UBL) that is covalently conjugated via an isopeptide bond to lysine residues of target proteins such as MOCS3, ATPBD3, CTU2, USP15 and CAS. The thiocarboxylated form serves as substrate for conjugation and oxidative stress specifically induces the formation of UBL-protein conjugates. This is Ubiquitin-related modifier 1 from Homo sapiens (Human).